Here is a 972-residue protein sequence, read N- to C-terminus: UvrABC system protein A (972 aa).

32 to 39 serves as a coordination point for ATP; that stretch reads GLSGSGKS. A C4-type; atypical zinc finger spans residues 257-285; the sequence is CPNGHALAVDDLEPRSFSFNSPYGACPEC. ABC transporter domains lie at 315-601 and 621-950; these read WSNG…KDSI and VDPR…KFLA. 654–661 is an ATP binding site; that stretch reads GVSGSGKS. A C4-type zinc finger spans residues 753 to 779; the sequence is CEACTGDGTIKIEMNFLPDVYVPCEVC.

The protein belongs to the ABC transporter superfamily. UvrA family. As to quaternary structure, forms a heterotetramer with UvrB during the search for lesions.

Its subcellular location is the cytoplasm. In terms of biological role, the UvrABC repair system catalyzes the recognition and processing of DNA lesions. UvrA is an ATPase and a DNA-binding protein. A damage recognition complex composed of 2 UvrA and 2 UvrB subunits scans DNA for abnormalities. When the presence of a lesion has been verified by UvrB, the UvrA molecules dissociate. The sequence is that of UvrABC system protein A from Mycobacterium bovis (strain ATCC BAA-935 / AF2122/97).